A 121-amino-acid polypeptide reads, in one-letter code: Large ribosomal subunit protein bL12 (121 aa).

It belongs to the bacterial ribosomal protein bL12 family. Homodimer. Part of the ribosomal stalk of the 50S ribosomal subunit. Forms a multimeric L10(L12)X complex, where L10 forms an elongated spine to which 2 to 4 L12 dimers bind in a sequential fashion. Binds GTP-bound translation factors.

In terms of biological role, forms part of the ribosomal stalk which helps the ribosome interact with GTP-bound translation factors. Is thus essential for accurate translation. The sequence is that of Large ribosomal subunit protein bL12 from Acinetobacter baylyi (strain ATCC 33305 / BD413 / ADP1).